Reading from the N-terminus, the 482-residue chain is Probable glycine dehydrogenase (decarboxylating) subunit 2 (482 aa).

Lys264 bears the N6-(pyridoxal phosphate)lysine mark.

Belongs to the GcvP family. C-terminal subunit subfamily. As to quaternary structure, the glycine cleavage system is composed of four proteins: P, T, L and H. In this organism, the P 'protein' is a heterodimer of two subunits. It depends on pyridoxal 5'-phosphate as a cofactor.

The catalysed reaction is N(6)-[(R)-lipoyl]-L-lysyl-[glycine-cleavage complex H protein] + glycine + H(+) = N(6)-[(R)-S(8)-aminomethyldihydrolipoyl]-L-lysyl-[glycine-cleavage complex H protein] + CO2. In terms of biological role, the glycine cleavage system catalyzes the degradation of glycine. The P protein binds the alpha-amino group of glycine through its pyridoxal phosphate cofactor; CO(2) is released and the remaining methylamine moiety is then transferred to the lipoamide cofactor of the H protein. The sequence is that of Probable glycine dehydrogenase (decarboxylating) subunit 2 from Treponema denticola (strain ATCC 35405 / DSM 14222 / CIP 103919 / JCM 8153 / KCTC 15104).